A 104-amino-acid chain; its full sequence is Large ribosomal subunit protein uL23 (104 aa).

It belongs to the universal ribosomal protein uL23 family. Part of the 50S ribosomal subunit. Contacts protein L29, and trigger factor when it is bound to the ribosome.

In terms of biological role, one of the early assembly proteins it binds 23S rRNA. One of the proteins that surrounds the polypeptide exit tunnel on the outside of the ribosome. Forms the main docking site for trigger factor binding to the ribosome. In Paraburkholderia phymatum (strain DSM 17167 / CIP 108236 / LMG 21445 / STM815) (Burkholderia phymatum), this protein is Large ribosomal subunit protein uL23.